A 318-amino-acid chain; its full sequence is Aspartate carbamoyltransferase catalytic subunit (318 aa).

Positions 58 and 59 each coordinate carbamoyl phosphate. L-aspartate is bound at residue Lys-86. 3 residues coordinate carbamoyl phosphate: Arg-108, His-141, and Gln-144. L-aspartate contacts are provided by Arg-174 and Arg-226. Residues Gly-270 and Pro-271 each coordinate carbamoyl phosphate.

This sequence belongs to the aspartate/ornithine carbamoyltransferase superfamily. ATCase family. As to quaternary structure, heterododecamer (2C3:3R2) of six catalytic PyrB chains organized as two trimers (C3), and six regulatory PyrI chains organized as three dimers (R2).

It catalyses the reaction carbamoyl phosphate + L-aspartate = N-carbamoyl-L-aspartate + phosphate + H(+). Its pathway is pyrimidine metabolism; UMP biosynthesis via de novo pathway; (S)-dihydroorotate from bicarbonate: step 2/3. In terms of biological role, catalyzes the condensation of carbamoyl phosphate and aspartate to form carbamoyl aspartate and inorganic phosphate, the committed step in the de novo pyrimidine nucleotide biosynthesis pathway. The polypeptide is Aspartate carbamoyltransferase catalytic subunit (Lactobacillus delbrueckii subsp. bulgaricus (strain ATCC BAA-365 / Lb-18)).